The primary structure comprises 284 residues: Pantothenate synthetase (284 aa).

30 to 37 (MGNLHDGH) serves as a coordination point for ATP. The Proton donor role is filled by H37. Q61 contacts (R)-pantoate. Residue Q61 coordinates beta-alanine. Position 149-152 (149-152 (GEKD)) interacts with ATP. Q155 provides a ligand contact to (R)-pantoate. Residues I178 and 186-189 (LSSR) each bind ATP.

This sequence belongs to the pantothenate synthetase family. Homodimer.

Its subcellular location is the cytoplasm. The enzyme catalyses (R)-pantoate + beta-alanine + ATP = (R)-pantothenate + AMP + diphosphate + H(+). It participates in cofactor biosynthesis; (R)-pantothenate biosynthesis; (R)-pantothenate from (R)-pantoate and beta-alanine: step 1/1. In terms of biological role, catalyzes the condensation of pantoate with beta-alanine in an ATP-dependent reaction via a pantoyl-adenylate intermediate. This is Pantothenate synthetase from Salmonella typhi.